A 683-amino-acid chain; its full sequence is Dixin (683 aa).

Leucine 2 carries N-myristoyl glycine lipidation. One can recognise a Calponin-homology (CH) domain in the interval 20-127; it reads EQQLQAYVAW…LVLALAAHFK (108 aa). Residues 127–300 are actin-binding; sequence KPGSSRTVNQ…LEKEMEEAKK (174 aa). Residue serine 186 is modified to Phosphoserine. Residues 207 to 235 are disordered; it reads GQQRSPSESSCSSLTSPSPIHSAKSESII. Residues 211-228 are compositionally biased toward low complexity; it reads SPSESSCSSLTSPSPIHS. The residue at position 231 (serine 231) is a Phosphoserine. A coiled-coil region spans residues 279-452; that stretch reads SWEEQLLEQQ…EALRKLSDVS (174 aa). Residues 482–492 are compositionally biased toward polar residues; sequence NYNSHNSQSNG. Disordered stretches follow at residues 482–509 and 556–594; these read NYNS…SNRG and TQKK…QSSP. Phosphoserine is present on serine 590. The DIX domain occupies 600–680; the sequence is CTKVLYFTDR…KIVAWVEEDH (81 aa).

It belongs to the DIXDC1 family. As to quaternary structure, isoform 1 but not isoform 2 binds filamentous actin. Interacts with the complex composed of DVL2 and Rac. Interacts with AXIN1; competes with MAP3K1. Interacts with MAP3K4 preventing MAP3K4 interaction with AXIN1. Directly interacts (via DIX domain) with DVL2 (via DIX domain). Interacts with gamma-tubulin. Post-translationally, phosphorylated on tyrosine and serine residues. In terms of processing, polyubiquitinated, leading to its proteasomal degradation. WNT3A signaling increases DIXDC1 protein levels by inhibiting its ubiquitination and subsequent degradation. As to expression, ubiquitously expressed with higher expression in cardiac and skeletal muscles.

The protein localises to the cell junction. It localises to the focal adhesion. Its subcellular location is the cytoplasm. It is found in the cytoskeleton. The protein resides in the stress fiber. Its function is as follows. Positive effector of the Wnt signaling pathway; activates WNT3A signaling via DVL2. Regulates JNK activation by AXIN1 and DVL2. The sequence is that of Dixin (DIXDC1) from Homo sapiens (Human).